The chain runs to 486 residues: uncharacterized protein (486 aa).

ABC transporter domains are found at residues 2–241 (VEFK…KVFV) and 249–486 (FEKD…LLFL). 36–43 (GKNGEGKS) is a binding site for ATP.

This sequence belongs to the ABC transporter superfamily.

This is an uncharacterized protein from Borreliella burgdorferi (strain ATCC 35210 / DSM 4680 / CIP 102532 / B31) (Borrelia burgdorferi).